We begin with the raw amino-acid sequence, 457 residues long: Glycine receptor subunit alpha-1 (457 aa).

The signal sequence occupies residues 1-28 (MYSFNTLRFYLWETIVFFSLAASKEAEA). The Extracellular segment spans residues 29–250 (ARSAPKPMSP…RFHLERQMGY (222 aa)). N-linked (GlcNAc...) asparagine glycosylation is present at Asn-66. Residues Arg-93 and Ser-157 each contribute to the glycine site. Cys-166 and Cys-180 are oxidised to a cystine. Zn(2+) is bound by residues Glu-220 and Asp-222. Cys-226 and Cys-237 form a disulfide bridge. 230-235 (YNTGKF) provides a ligand contact to strychnine. Thr-232 lines the glycine pocket. His-243 is a binding site for Zn(2+). Residues 251–272 (YLIQMYIPSLLIVILSWISFWI) form a helical membrane-spanning segment. Residues 273 to 277 (NMDAA) are Cytoplasmic-facing. A helical transmembrane segment spans residues 278–298 (PARVGLGITTVLTMTTQSSGS). Over 299–309 (RASLPKVSYVK) the chain is Extracellular. A helical transmembrane segment spans residues 310–330 (AIDIWMAVCLLFVFSALLEYA). The Cytoplasmic segment spans residues 331-425 (AVNFVSRQHK…FIQRAKKIDK (95 aa)). The tract at residues 391–410 (KGANNNNTTNPPPAPSKSPE) is disordered. Residues 426 to 446 (ISRIGFPMAFLIFNMFYWIIY) traverse the membrane as a helical segment. At 447–457 (KIVRREDVHNK) the chain is on the extracellular side.

Belongs to the ligand-gated ion channel (TC 1.A.9) family. Glycine receptor (TC 1.A.9.3) subfamily. GLRA1 sub-subfamily. In terms of assembly, interacts with GLRB to form heteropentameric channels; this is probably the predominant form in vivo. Heteropentamer composed of four GLRA1 subunits and one GLRB subunit. Heteropentamer composed of two GLRA1 and three GLRB. Heteropentamer composed of three GLRA1 and two GLRB. Homopentamer (in vitro). Both homopentamers and heteropentamers form functional ion channels, but their characteristics are subtly different. Detected in spinal cord neurons. Detected in brain stem neurons. Detected at lower levels in hippocampus and cerebellum. Detected in the inner plexiform layer of the retina (at protein level).

The protein localises to the postsynaptic cell membrane. It is found in the synapse. The protein resides in the perikaryon. Its subcellular location is the cell projection. It localises to the dendrite. The protein localises to the cell membrane. The enzyme catalyses chloride(in) = chloride(out). Its activity is regulated as follows. Channel opening is triggered by extracellular glycine. Channel characteristics depend on the subunit composition; heteropentameric channels are activated by lower glycine levels and display faster desensitization. Channel opening is also triggered by taurine and beta-alanine. Inhibited by strychnine. Strychnine binding locks the channel in a closed conformation and prevents channel opening in response to extracellular glycine. Inhibited by picrotoxin. Channel activity is enhanced by 5 uM Zn(2+) and inhibited by 100 uM Zn(2+). Functionally, subunit of heteromeric glycine-gated chloride channels. Plays an important role in the down-regulation of neuronal excitability. Contributes to the generation of inhibitory postsynaptic currents. Channel activity is potentiated by ethanol. Potentiation of channel activity by intoxicating levels of ethanol contribute to the sedative effects of ethanol. The sequence is that of Glycine receptor subunit alpha-1 (Glra1) from Mus musculus (Mouse).